The sequence spans 56 residues: Large ribosomal subunit protein bL32 (56 aa).

Basic residues predominate over residues 1 to 16 (MAVQKSKKSRSRRGMR). The interval 1-38 (MAVQKSKKSRSRRGMRRSHDAVTPENLSVDPVSGETHR) is disordered.

It belongs to the bacterial ribosomal protein bL32 family.

The sequence is that of Large ribosomal subunit protein bL32 from Colwellia psychrerythraea (strain 34H / ATCC BAA-681) (Vibrio psychroerythus).